A 154-amino-acid chain; its full sequence is MGLSDGEWQLVLNAWGKVEADVAGHGQEVLIRLFTGHPETLEKFDKFKHLKTEAEMKASEDLKKHGNTVLTALGGILKKKGHHEAEVKHLAESHANKHKIPVKYLEFISDAIIHVLHAKHPSDFGADAQGAMSKALELFRNDMAAQYKVLGFQG.

The 147-residue stretch at 2–148 folds into the Globin domain; sequence GLSDGEWQLV…FRNDMAAQYK (147 aa). The residue at position 4 (Ser4) is a Phosphoserine. Residue His65 participates in nitrite binding. Position 65 (His65) interacts with O2. Thr68 carries the post-translational modification Phosphothreonine. Residue His94 participates in heme b binding.

As to quaternary structure, monomer.

The protein resides in the cytoplasm. The protein localises to the sarcoplasm. It catalyses the reaction Fe(III)-heme b-[protein] + nitric oxide + H2O = Fe(II)-heme b-[protein] + nitrite + 2 H(+). The enzyme catalyses H2O2 + AH2 = A + 2 H2O. Its function is as follows. Monomeric heme protein which primary function is to store oxygen and facilitate its diffusion within muscle tissues. Reversibly binds oxygen through a pentacoordinated heme iron and enables its timely and efficient release as needed during periods of heightened demand. Depending on the oxidative conditions of tissues and cells, and in addition to its ability to bind oxygen, it also has a nitrite reductase activity whereby it regulates the production of bioactive nitric oxide. Under stress conditions, like hypoxia and anoxia, it also protects cells against reactive oxygen species thanks to its pseudoperoxidase activity. The protein is Myoglobin of Rangifer tarandus (Reindeer).